Reading from the N-terminus, the 578-residue chain is PX domain-containing protein kinase-like protein (578 aa).

The 113-residue stretch at 14-126 folds into the PX domain; the sequence is LDDTVPLTAA…KFLDPNNYSA (113 aa). The region spanning 88–481 is the Protein kinase domain; it reads FIAERQKGLQ…LENSEEHSAK (394 aa). Composition is skewed to basic residues over residues 437–448 and 457–469; these read IHQHRRLTRAQS and KKRK…KSKR. 2 disordered regions span residues 437 to 548 and 559 to 578; these read IHQH…NGMS and FQKG…PKIG. Positions 483-513 are enriched in low complexity; the sequence is SNSNNSAGSGASSPLTSPSSPTPPSTSGISA. A compositionally biased stretch (pro residues) spans 514–530; that stretch reads LPPPPPPPPPPAAPLPP. A WH2 domain is found at 548-567; the sequence is SRGALLSSIQNFQKGTLRKA. Basic and acidic residues predominate over residues 568–578; the sequence is KTCDHSAPKIG.

Belongs to the protein kinase superfamily. In terms of tissue distribution, widely expressed in all tissues examined except in heart. Isoform 1 is expressed in high levels in the brain, skeletal muscle, spleen and testis. Isoform 7 expression has yet to be demonstrated.

It is found in the cytoplasm. The protein localises to the cell membrane. Its function is as follows. Binds to and modulates brain Na,K-ATPase subunits ATP1B1 and ATP1B3 and may thereby participate in the regulation of electrical excitability and synaptic transmission. May not display kinase activity. The polypeptide is PX domain-containing protein kinase-like protein (Homo sapiens (Human)).